Consider the following 727-residue polypeptide: NADH-ubiquinone oxidoreductase 75 kDa subunit, mitochondrial (727 aa).

The transit peptide at 1–23 directs the protein to the mitochondrion; the sequence is MLRIPVKRALIGLSKSPKGYVRS. Residues 30-108 enclose the 2Fe-2S ferredoxin-type domain; the sequence is NLIEVFVDGQ…GWNILTNSEK (79 aa). Residues Cys64, Cys75, and Cys78 each contribute to the [2Fe-2S] cluster site. Position 84 is an N6-acetyllysine (Lys84). Cys92 is a binding site for [2Fe-2S] cluster. Residues 108–147 enclose the 4Fe-4S His(Cys)3-ligated-type domain; sequence KSKKAREGVMEFLLANHPLDCPICDQGGECDLQDQSMMFG. 8 residues coordinate [4Fe-4S] cluster: His124, Cys128, Cys131, Cys137, Cys176, Cys179, Cys182, and Cys226. The region spanning 245-301 is the 4Fe-4S Mo/W bis-MGD-type domain; the sequence is TRKTESIDVMDAVGSNIVVSTRTGEVMRILPRMHEDINEEWISDKTRFAYDGLKRQR. Residues Lys499 and Lys709 each carry the N6-acetyllysine modification.

This sequence belongs to the complex I 75 kDa subunit family. As to quaternary structure, core subunit of respiratory chain NADH dehydrogenase (Complex I) which is composed of 45 different subunits. This is the largest subunit of complex I and it is a component of the iron-sulfur (IP) fragment of the enzyme. Complex I associates with ubiquinol-cytochrome reductase complex (Complex III) to form supercomplexes. Interacts with MDM2 and AKAP1. It depends on [2Fe-2S] cluster as a cofactor. Requires [4Fe-4S] cluster as cofactor.

The protein resides in the mitochondrion inner membrane. The catalysed reaction is a ubiquinone + NADH + 5 H(+)(in) = a ubiquinol + NAD(+) + 4 H(+)(out). In terms of biological role, core subunit of the mitochondrial membrane respiratory chain NADH dehydrogenase (Complex I) which catalyzes electron transfer from NADH through the respiratory chain, using ubiquinone as an electron acceptor. Essential for catalysing the entry and efficient transfer of electrons within complex I. Plays a key role in the assembly and stability of complex I and participates in the association of complex I with ubiquinol-cytochrome reductase complex (Complex III) to form supercomplexes. The protein is NADH-ubiquinone oxidoreductase 75 kDa subunit, mitochondrial (Ndufs1) of Rattus norvegicus (Rat).